The following is a 171-amino-acid chain: ATP synthase subunit b (171 aa).

The chain crosses the membrane as a helical span at residues F2 to L22.

Belongs to the ATPase B chain family. F-type ATPases have 2 components, F(1) - the catalytic core - and F(0) - the membrane proton channel. F(1) has five subunits: alpha(3), beta(3), gamma(1), delta(1), epsilon(1). F(0) has three main subunits: a(1), b(2) and c(10-14). The alpha and beta chains form an alternating ring which encloses part of the gamma chain. F(1) is attached to F(0) by a central stalk formed by the gamma and epsilon chains, while a peripheral stalk is formed by the delta and b chains.

The protein localises to the cell inner membrane. Functionally, f(1)F(0) ATP synthase produces ATP from ADP in the presence of a proton or sodium gradient. F-type ATPases consist of two structural domains, F(1) containing the extramembraneous catalytic core and F(0) containing the membrane proton channel, linked together by a central stalk and a peripheral stalk. During catalysis, ATP synthesis in the catalytic domain of F(1) is coupled via a rotary mechanism of the central stalk subunits to proton translocation. Its function is as follows. Component of the F(0) channel, it forms part of the peripheral stalk, linking F(1) to F(0). The chain is ATP synthase subunit b from Helicobacter pylori (strain HPAG1).